The sequence spans 2179 residues: Genome polyprotein (2179 aa).

The short motif at 763-765 (RGD) is the Cell attachment site element. The 96-residue stretch at 786 to 881 (LAYLDRGFYK…IFGSHSLSQH (96 aa)) folds into the LRAT domain. The active-site For protein 2A H-NC is H796. C865 serves as the catalytic For protein 2A H-NC; Acyl-thioester intermediate. Residues 1156-1317 (FQELARIPNR…KHYSKSGKLN (162 aa)) enclose the SF3 helicase domain. 1184-1191 (GEPGQGKS) lines the ATP pocket. Y1493 is modified (O-(5'-phospho-RNA)-tyrosine). One can recognise a Peptidase C3 domain in the interval 1517-1707 (APYDGQLEHI…IPFNFLKNDM (191 aa)). Active-site for protease 3C activity residues include H1557, D1595, and C1669. Catalysis depends on C1896, which acts as the Acyl-thioester intermediate. The RdRp catalytic domain occupies 1944–2058 (DYNYEMDYSQ…SLDKEIEPER (115 aa)). Positions 1950 and 2044 each coordinate Mg(2+).

The protein belongs to the picornaviruses polyprotein family. As to quaternary structure, interacts with capsid protein VP1 and capsid protein VP3 to form heterotrimeric protomers. Five protomers subsequently associate to form pentamers which serve as building blocks for the capsid. Interacts with capsid protein VP0, and capsid protein VP3 to form heterotrimeric protomers. Five protomers subsequently associate to form pentamers which serve as building blocks for the capsid. In terms of assembly, interacts with capsid protein VP0 and capsid protein VP1 to form heterotrimeric protomers. Five protomers subsequently associate to form pentamers which serve as building blocks for the capsid. As to quaternary structure, homohexamer; forms a hexameric ring structure with 6-fold symmetry characteristic of AAA+ ATPases. Homodimer. Interacts with host ACBD3. In terms of assembly, interacts with RNA-directed RNA polymerase. As to quaternary structure, interacts with Viral protein genome-linked. Mg(2+) serves as cofactor. Post-translationally, VPg is uridylylated by the polymerase and is covalently linked to the 5'-end of genomic RNA. This uridylylated form acts as a nucleotide-peptide primer for the polymerase. Specific enzymatic cleavages yield mature proteins. All cleavages are catalyzed by P3C.

The protein localises to the virion. It is found in the host cytoplasm. It localises to the host nucleus. The protein resides in the host nucleolus. Its subcellular location is the host cytoplasmic vesicle membrane. It catalyses the reaction RNA(n) + a ribonucleoside 5'-triphosphate = RNA(n+1) + diphosphate. The catalysed reaction is a ribonucleoside 5'-triphosphate + H2O = a ribonucleoside 5'-diphosphate + phosphate + H(+). The enzyme catalyses Selective cleavage of Gln-|-Gly bond in the poliovirus polyprotein. In other picornavirus reactions Glu may be substituted for Gln, and Ser or Thr for Gly.. Its function is as follows. Forms an icosahedral capsid of pseudo T=3 symmetry together with capsid proteins VP1 and VP3. The capsid is 300 Angstroms in diameter, composed of 60 copies of each capsid protein and enclosing the viral positive strand RNA genome. Capsid proteins interact with host alpha-V/beta-3 integrin heterodimer to provide virion attachment target cell. This attachment induces virion internalization predominantly through clathrin-mediated endocytosis. Binds packaging signals present in the viral RNA. Forms an icosahedral capsid of pseudo T=3 symmetry together with capsid proteins VP0 and VP1. The capsid is 300 Angstroms in diameter, composed of 60 copies of each capsid protein and enclosing the viral positive strand RNA genome. Capsid proteins interact with host alpha-V/beta-3 integrin heterodimer to provide virion attachment target cell. This attachment induces virion internalization predominantly through clathrin-mediated endocytosis. Binds packaging signals present in the viral RNA. Functionally, forms an icosahedral capsid of pseudo T=3 symmetry together with capsid proteins VP0 and VP3. The capsid is 300 Angstroms in diameter, composed of 60 copies of each capsid protein and enclosing the viral positive strand RNA genome. Capsid proteins interact with host alpha-V/beta-3 integrin heterodimer to provide virion attachment target cell. This attachment induces virion internalization predominantly through clathrin-mediated endocytosis. Binds packaging signals present in the viral RNA. In terms of biological role, is not a protease. Its function is as follows. Plays an essential role in the virus replication cycle by acting as a viroporin. Creates a pore in the host endoplasmic reticulum and as a consequence releases Ca2+ in the cytoplasm of infected cell. In turn, high levels of cytoplasmic calcium may trigger membrane trafficking and transport of viral ER-associated proteins to viroplasms, sites of viral genome replication. Induces and associates with structural rearrangements of intracellular membranes. Displays RNA-binding, nucleotide binding and NTPase activities. May play a role in virion morphogenesis and viral RNA encapsidation by interacting with the capsid protein VP3. Functionally, localizes the viral replication complex to the surface of membranous vesicles. It inhibits host cell endoplasmic reticulum-to-Golgi apparatus transport and causes the disassembly of the Golgi complex, possibly through GBF1 interaction. This would result in depletion of MHC, trail receptors and IFN receptors at the host cell surface. Plays an essential role in viral RNA replication by recruiting ACBD3 and PI4KB at the viral replication sites, thereby allowing the formation of the rearranged membranous structures where viral replication takes place. In terms of biological role, acts as a primer for viral RNA replication and remains covalently bound to viral genomic RNA. VPg is uridylylated prior to priming replication into VPg-pUpU. The VPg-pUpU is then used as primer on the genomic RNA poly(A) by the RNA-dependent RNA polymerase to replicate the viral genome. Following genome release from the infecting virion in the cytoplasm, the VPg-RNA linkage is probably removed by host TDP2. During the late stage of the replication cycle, host TDP2 is excluded from sites of viral RNA synthesis and encapsidation, allowing for the generation of progeny virions. Its function is as follows. Cysteine protease that generates mature viral proteins from the precursor polyprotein. In addition to its proteolytic activity, it binds to viral RNA, and thus influences viral genome replication. RNA and substrate bind cooperatively to the protease. Replicates the viral genomic RNA on the surface of intracellular membranes. Covalently attaches UMP to a tyrosine of VPg, which is used to prime RNA synthesis. The positive stranded RNA genome is first replicated at virus induced membranous vesicles, creating a dsRNA genomic replication form. This dsRNA is then used as template to synthesize positive stranded RNA genomes. ss(+)RNA genomes are either translated, replicated or encapsidated. This Human parechovirus 2 (strain Williamson) (HPeV-2) protein is Genome polyprotein.